Consider the following 257-residue polypeptide: MNPWINANVLKVHKWTQNLFSLILNAEIAPFQAGQFTKLALNEENINFSNNVKKKKIQRAYSFVNAPSNKNLEIYIVRILNGKLSNLLYNLKSGDNLFIKEKSFGFFTLDEIPNCKTLWMFATGTGIGPYCSILQEYKNINRFKNIILIHAVRYQNELTYLPLMKQLYKSYNGKLKIETIVSREKNHNSLYGRIPLLLQNQILEKKIGLKINRNDSHVMLCGNPAMVKDTYLFLQKDRCMQKNLRRKHGHITMENYW.

The region spanning N2–D110 is the FAD-binding FR-type domain. Residues R59–S62, Y75, K83–S85, and T125 contribute to the FAD site. Residues V152 to R153, S182 to R183, R193, N223 to A225, and D229 contribute to the NADP(+) site. Y256–W257 contacts FAD.

Belongs to the ferredoxin--NADP reductase type 1 family. FAD serves as cofactor.

Its subcellular location is the cytoplasm. The enzyme catalyses 2 reduced [2Fe-2S]-[ferredoxin] + NADP(+) + H(+) = 2 oxidized [2Fe-2S]-[ferredoxin] + NADPH. It carries out the reaction reduced [flavodoxin] + NADP(+) = oxidized [flavodoxin] + NADPH + 2 H(+). In terms of biological role, transports electrons between flavodoxin or ferredoxin and NADPH. The chain is Flavodoxin/ferredoxin--NADP reductase (fpr) from Buchnera aphidicola subsp. Schizaphis graminum (strain Sg).